A 73-amino-acid chain; its full sequence is Putative defensin-like protein 277 (73 aa).

Residues 1–24 form the signal peptide; the sequence is MSAQKIYLASLLLFICLVFPQSTA. 4 disulfide bridges follow: Cys-27–Cys-64, Cys-33–Cys-52, Cys-39–Cys-62, and Cys-43–Cys-63.

The protein belongs to the DEFL family.

Its subcellular location is the secreted. The polypeptide is Putative defensin-like protein 277 (Arabidopsis thaliana (Mouse-ear cress)).